Here is a 631-residue protein sequence, read N- to C-terminus: Transforming acidic coiled-coil-containing protein 3 (631 aa).

S2 carries the N-acetylserine modification. Position 39 is a phosphoserine (S39). Over residues 42–59 (ENVPPQSQAKATNVTFQT) the composition is skewed to polar residues. A disordered region spans residues 42-70 (ENVPPQSQAKATNVTFQTPPRDPQTHRIL). At S71 the chain carries Phosphoserine. Necessary but not sufficient for spindle localization stretches follow at residues 311 to 366 (EESF…PMPV) and 384 to 631 (KPTE…MEKI). Residue S347 is modified to Phosphoserine; by AURKA. A disordered region spans residues 363–385 (PMPVAPITNSTQDTEEESGSGKP). Residues 431–630 (QKDLDAVVNV…CDDLISKMEK (200 aa)) are a coiled coil.

It belongs to the TACC family. In terms of assembly, interacts with GCN5L2 and PCAF. The coiled coil C-terminal region interacts with AH receptor nuclear translocator protein (ARNT) and ARNT2. Interacts with CCDC100/CEP120. Interacts with CKAP5 independently of clathrin. Interacts with CKAP5 and clathrin forming the TACC3/ch-TOG/clathrin complex located at spindle inter-microtubules bridges; TACC3 (phosphorylated at Ser-347 by AURKA) and CLTC are proposed to form a composite microtubule interaction surface. As to expression, embryonically expressed.

The protein localises to the cytoplasm. It localises to the cytoskeleton. The protein resides in the microtubule organizing center. Its subcellular location is the centrosome. It is found in the spindle pole. Plays a role in the microtubule-dependent coupling of the nucleus and the centrosome. Involved in the processes that regulate centrosome-mediated interkinetic nuclear migration (INM) of neural progenitors. Acts as a component of the TACC3/ch-TOG/clathrin complex proposed to contribute to stabilization of kinetochore fibers of the mitotic spindle by acting as inter-microtubule bridge. The TACC3/ch-TOG/clathrin complex is required for the maintenance of kinetochore fiber tension. May be involved in the control of cell growth and differentiation. May have a role in embryonic development. The protein is Transforming acidic coiled-coil-containing protein 3 (Tacc3) of Mus musculus (Mouse).